The primary structure comprises 93 residues: UPF0223 protein gbs1030 (93 aa).

It belongs to the UPF0223 family.

The protein is UPF0223 protein gbs1030 of Streptococcus agalactiae serotype III (strain NEM316).